We begin with the raw amino-acid sequence, 380 residues long: Queuine tRNA-ribosyltransferase (380 aa).

Residue D93 is the Proton acceptor of the active site. Substrate is bound by residues 93-97 (DSGGF), D147, Q198, and G225. Residues 256-262 (GVGLPSN) are RNA binding. D275 functions as the Nucleophile in the catalytic mechanism. Positions 280–284 (ARNGR) are RNA binding; important for wobble base 34 recognition. The Zn(2+) site is built by C313, C315, C318, and H344.

This sequence belongs to the queuine tRNA-ribosyltransferase family. Homodimer. Within each dimer, one monomer is responsible for RNA recognition and catalysis, while the other monomer binds to the replacement base PreQ1. The cofactor is Zn(2+).

The enzyme catalyses 7-aminomethyl-7-carbaguanine + guanosine(34) in tRNA = 7-aminomethyl-7-carbaguanosine(34) in tRNA + guanine. It participates in tRNA modification; tRNA-queuosine biosynthesis. In terms of biological role, catalyzes the base-exchange of a guanine (G) residue with the queuine precursor 7-aminomethyl-7-deazaguanine (PreQ1) at position 34 (anticodon wobble position) in tRNAs with GU(N) anticodons (tRNA-Asp, -Asn, -His and -Tyr). Catalysis occurs through a double-displacement mechanism. The nucleophile active site attacks the C1' of nucleotide 34 to detach the guanine base from the RNA, forming a covalent enzyme-RNA intermediate. The proton acceptor active site deprotonates the incoming PreQ1, allowing a nucleophilic attack on the C1' of the ribose to form the product. After dissociation, two additional enzymatic reactions on the tRNA convert PreQ1 to queuine (Q), resulting in the hypermodified nucleoside queuosine (7-(((4,5-cis-dihydroxy-2-cyclopenten-1-yl)amino)methyl)-7-deazaguanosine). This Clostridium perfringens (strain 13 / Type A) protein is Queuine tRNA-ribosyltransferase.